A 287-amino-acid polypeptide reads, in one-letter code: Ethylene-inducing xylanase 3 (287 aa).

The signal sequence occupies residues Met-1–Ala-19. The 189-residue stretch at Gln-31–Ala-219 folds into the GH11 domain. The active-site Nucleophile is Glu-115. The Proton donor role is filled by Glu-206. The CBM1 domain maps to Ser-252–Leu-287.

The protein belongs to the glycosyl hydrolase 11 (cellulase G) family.

It carries out the reaction Endohydrolysis of (1-&gt;4)-beta-D-xylosidic linkages in xylans.. The protein operates within glycan degradation; xylan degradation. Its function is as follows. Endo-1,4-beta-xylanase involved in the hydrolysis of xylan, a major structural heterogeneous polysaccharide found in plant biomass representing the second most abundant polysaccharide in the biosphere, after cellulose. Exhibits immunity-inducing activity and induces cell death in Nicotiana benthamiana. This is Ethylene-inducing xylanase 3 from Verticillium longisporum (Verticillium dahliae var. longisporum).